A 151-amino-acid chain; its full sequence is UPF0756 membrane protein GTNG_2661 (151 aa).

A run of 4 helical transmembrane segments spans residues 5–25, 53–73, 86–106, and 116–136; these read VLFL…SLII, WGVT…EIGF, WIAL…VMLL, and LVLG…GPLI.

It belongs to the UPF0756 family.

It is found in the cell membrane. The polypeptide is UPF0756 membrane protein GTNG_2661 (Geobacillus thermodenitrificans (strain NG80-2)).